The primary structure comprises 133 residues: ATP synthase epsilon chain (133 aa).

Belongs to the ATPase epsilon chain family. As to quaternary structure, F-type ATPases have 2 components, CF(1) - the catalytic core - and CF(0) - the membrane proton channel. CF(1) has five subunits: alpha(3), beta(3), gamma(1), delta(1), epsilon(1). CF(0) has three main subunits: a, b and c.

It is found in the cell membrane. In terms of biological role, produces ATP from ADP in the presence of a proton gradient across the membrane. The sequence is that of ATP synthase epsilon chain (atpC) from Clostridium acetobutylicum (strain ATCC 824 / DSM 792 / JCM 1419 / IAM 19013 / LMG 5710 / NBRC 13948 / NRRL B-527 / VKM B-1787 / 2291 / W).